Consider the following 180-residue polypeptide: NADH-quinone oxidoreductase subunit I (180 aa).

4Fe-4S ferredoxin-type domains lie at 50 to 80 (LTRN…LQKS) and 90 to 119 (KFFR…LMPD). [4Fe-4S] cluster-binding residues include C60, C63, C66, C70, C99, C102, C105, and C109.

The protein belongs to the complex I 23 kDa subunit family. NDH-1 is composed of 13 different subunits. Subunits NuoA, H, J, K, L, M, N constitute the membrane sector of the complex. It depends on [4Fe-4S] cluster as a cofactor.

The protein localises to the cell membrane. The enzyme catalyses a quinone + NADH + 5 H(+)(in) = a quinol + NAD(+) + 4 H(+)(out). NDH-1 shuttles electrons from NADH, via FMN and iron-sulfur (Fe-S) centers, to quinones in the respiratory chain. The immediate electron acceptor for the enzyme in this species is believed to be ubiquinone. Couples the redox reaction to proton translocation (for every two electrons transferred, four hydrogen ions are translocated across the cytoplasmic membrane), and thus conserves the redox energy in a proton gradient. The polypeptide is NADH-quinone oxidoreductase subunit I (Buchnera aphidicola subsp. Schizaphis graminum (strain Sg)).